The primary structure comprises 163 residues: Nucleotide-binding protein SACE_6882 (163 aa).

This sequence belongs to the YajQ family.

Its function is as follows. Nucleotide-binding protein. The polypeptide is Nucleotide-binding protein SACE_6882 (Saccharopolyspora erythraea (strain ATCC 11635 / DSM 40517 / JCM 4748 / NBRC 13426 / NCIMB 8594 / NRRL 2338)).